A 286-amino-acid chain; its full sequence is Acyl-CoA thioesterase 2 (286 aa).

Catalysis depends on charge relay system residues aspartate 204, threonine 228, and glutamine 278.

It belongs to the C/M/P thioester hydrolase family. In terms of assembly, homotetramer.

The enzyme catalyses a fatty acyl-CoA + H2O = a fatty acid + CoA + H(+). Thioesterase that has relatively broad substrate specificity, hydrolyzing primarily medium- and long-chain acyl-CoA substrates to free fatty acids and CoA. This is Acyl-CoA thioesterase 2 (tesB) from Haemophilus influenzae (strain ATCC 51907 / DSM 11121 / KW20 / Rd).